A 21-amino-acid polypeptide reads, in one-letter code: Large ribosomal subunit protein uL30 (21 aa).

A compositionally biased stretch (polar residues) spans 1 to 15; that stretch reads AKTENKTVTVRQTAS. A disordered region spans residues 1-21; it reads AKTENKTVTVRQTASPIXXXK.

It belongs to the universal ribosomal protein uL30 family. Part of the 50S ribosomal subunit.

In Brevundimonas diminuta (Pseudomonas diminuta), this protein is Large ribosomal subunit protein uL30 (rpmD).